Reading from the N-terminus, the 463-residue chain is MEKPSREAFEGNNKLLIGIVLSVITFWLFAQSLVNVVLILEDSFNTDIGTVNIAVSITALFSGMFVVGVGGLADKYGRIKLTNIGIILNILGSLLIIISNIPLLLIIGRLIQGLSAACIMPATLSIIKSYYIGKDRQRALSYWSIGSWGGSGVCSFFGGAVATLLGWRWIFILSIIISLIALFLIKGTPETKSKSISLNKFDIKGLVLLVIMLLSLNILITKGSELGVTSLLFITLLAIAIGSFSLFIVLEKRATNPLIDFKLFKNKAYTGATASNFLLNGVAGTLIVANTFVQRGLGYSLLQAGSLSITYLVMVLIMIRVGEKLLQTLGCKKPMLIGTGVLIVGECLISLTFLPEILYVICCIIGYLFFGLGLGIYATPSTDTAIANAPLEKVGVAAGIYKMASALGGAFGVALSGAVYAIVSNMTNIYTGAMIALWLNAGMAILSFVIILLLVPKQNDTQL.

Transmembrane regions (helical) follow at residues 19 to 39 (IVLS…VVLI), 53 to 73 (IAVS…GGLA), 86 to 106 (IILN…LLLI), 107 to 127 (IGRL…LSII), 142 to 162 (YWSI…GAVA), 165 to 185 (LGWR…LFLI), 201 to 221 (FDIK…ILIT), 230 to 250 (SLLF…FIVL), 273 to 293 (TASN…NTFV), 299 to 319 (YSLL…LIMI), 334 to 354 (PMLI…LTFL), 357 to 377 (ILYV…LGIY), 403 to 423 (MASA…YAIV), and 435 to 455 (IALW…LLLV).

Belongs to the major facilitator superfamily. TCR/Tet family.

Its subcellular location is the cell membrane. Its function is as follows. Multidrug efflux pump that acts independently of NorA and is one of the factors that confers resistance against diverse quinolones and chemical compounds. This Staphylococcus aureus (strain bovine RF122 / ET3-1) protein is Quinolone resistance protein NorB (norB).